Reading from the N-terminus, the 444-residue chain is Zinc finger CCCH domain-containing protein 63 (444 aa).

3 consecutive C3H1-type zinc fingers follow at residues 56–84, 101–129, and 147–175; these read RIGE…HPAD, RIGQ…HPRE, and RPNE…HPQP. The interval 251-276 is disordered; that stretch reads GSSSSDDQQRTAGGAQYYTGSRHSET. 2 C3H1-type zinc fingers span residues 309–337 and 355–383; these read RPDQ…HPKE and RPGE…HPMG. The segment at 405–444 is disordered; that stretch reads PVPAHSEVSPDNVSGRSRRITHSDSQQIPSGERGTEREAS.

This is Zinc finger CCCH domain-containing protein 63 from Oryza sativa subsp. japonica (Rice).